A 655-amino-acid chain; its full sequence is Chaperone protein dnaK1 (655 aa).

At Thr-197 the chain carries Phosphothreonine; by autocatalysis.

This sequence belongs to the heat shock protein 70 family.

Acts as a chaperone. The polypeptide is Chaperone protein dnaK1 (dnaK1) (Synechococcus elongatus (strain ATCC 33912 / PCC 7942 / FACHB-805) (Anacystis nidulans R2)).